We begin with the raw amino-acid sequence, 196 residues long: Bcl-2-like protein 11 (196 aa).

The interval 1-68 (MAKQPSDVNS…PLAPPASPGP (68 aa)) is disordered. The span at 34–43 (TSLQTESQGN) shows a compositional bias: polar residues. S65 carries the phosphoserine; by MAPK modification. Phosphoserine occurs at positions 73, 83, and 90. The interval 90–114 (SGYFSFDTDRSPAPMSCDKSTQTPS) is disordered. The short motif at 146 to 160 (IAQELRRIGDEFNET) is the BH3 element.

The protein belongs to the Bcl-2 family. As to quaternary structure, forms heterodimers with a number of antiapoptotic Bcl-2 proteins, including MCL1, BCL2, BCL2L1 isoform Bcl-X(L), BCL2A1/BFL-1, and BCL2L2/BCLW. Does not heterodimerize with proapoptotic proteins such as BAD, BOK or BAK. Identified in a complex containing BCL2L11, DYNLL1 and BCL2L1 isoform Bcl-X(L); BH3 integrity is required for BCL2L1-binding. Interacts with YWHAZ. When phosphorylated, interacts with TRIM2; this interaction is associated with ubiquitination and degradation. Interacts (via BH3) with MCL1; this interaction may sequester BCL2L11 and prevent its pro-apoptotic activity. When phosphorylated, isoform BimEL interacts with USP27X; this interaction leads to BCL2L11 deubiquitination and stabilization. Interacts with GIMAP5. Interacts with BCL2L10/BCL-B. In terms of processing, phosphorylation at Ser-65 by MAPK1/MAPK3 leads interaction with TRIM2 and ubiquitination, followed by proteasomal degradation. Deubiquitination catalyzed by USP27X stabilizes the protein. Post-translationally, ubiquitination by TRIM2 following phosphorylation by MAPK1/MAPK3 leads to proteasomal degradation. Conversely, deubiquitination catalyzed by USP27X stabilizes the protein. As to expression, widely expressed.

It localises to the membrane. Its subcellular location is the mitochondrion. Functionally, induces apoptosis and anoikis. In Rattus norvegicus (Rat), this protein is Bcl-2-like protein 11 (Bcl2l11).